Consider the following 477-residue polypeptide: Sensor protein kinase PmrB (477 aa).

A run of 2 helical transmembrane segments spans residues 13–33 (LLVN…ALTY) and 161–181 (LLLF…GGLV). The HAMP domain occupies 186–238 (ARGLAPLREVQAEVQQRSARHLQPIAVEAVPLEIRGLIDELNLLLERLRTALE). Residues 246 to 459 (DAAHEIRTPL…EVQVFLPKTQ (214 aa)) form the Histidine kinase domain. Histidine 249 carries the phosphohistidine; by autocatalysis modification. The interval 455-477 (LPKTQPDATRPPARGPDSGRSHI) is disordered.

Its subcellular location is the membrane. The catalysed reaction is ATP + protein L-histidine = ADP + protein N-phospho-L-histidine.. Its function is as follows. Member of the two-component regulatory system PmrA/PmrB that plays a role in the regulation of resistance towards polymyxin B and cationic antimicrobial peptides in response to limiting concentrations of Mg(2+). Also autoregulates its own pmrAB operon under Mg(2+)-limiting conditions. May function as a membrane-associated protein kinase that phosphorylates PmrA in response to environmental signals leading to activation of specific gene promoters. This Pseudomonas aeruginosa (strain ATCC 15692 / DSM 22644 / CIP 104116 / JCM 14847 / LMG 12228 / 1C / PRS 101 / PAO1) protein is Sensor protein kinase PmrB (pmrB).